Here is a 759-residue protein sequence, read N- to C-terminus: Olfactomedin-like protein 2B (759 aa).

An N-terminal signal peptide occupies residues 1 to 20 (MAKSLLLVLCFALVTTLGWG). Coiled-coil stretches lie at residues 40-68 (TEDETLQNEADNQENVLSQLLGDYDKVKA) and 179-209 (KLEEEISKNLTKENEQIREDVEEIRTEMNKR). N-linked (GlcNAc...) asparagine glycosylation is found at Asn187 and Asn213. Disordered stretches follow at residues 346–396 (TRRP…VSAS) and 456–494 (THTAPVPPPPVRTDSPGKDSTARQGTVPPGPTLSPEEED). Positions 356 to 396 (AAVTADAGTTSAGTPTTALPSARLPASTAAPSTPDPAVSAS) are enriched in low complexity. The Olfactomedin-like domain maps to 502–759 (RCKDTLSTIT…QVTYHVIFAY (258 aa)). A disulfide bridge connects residues Cys503 and Cys689. Asn704 carries an N-linked (GlcNAc...) asparagine glycan.

As to quaternary structure, homodimer. Binds to heparin and chondroitin sulfate E. In terms of processing, O-glycosylated and N-glycosylated.

It is found in the secreted. The chain is Olfactomedin-like protein 2B (OLFML2B) from Bos taurus (Bovine).